The primary structure comprises 344 residues: Fructose-1,6-bisphosphatase class 1 (344 aa).

Positions 91, 110, 112, and 113 each coordinate Mg(2+). Substrate is bound by residues 113-116 (DGSS) and asparagine 200. Glutamate 272 serves as a coordination point for Mg(2+).

This sequence belongs to the FBPase class 1 family. In terms of assembly, homotetramer. The cofactor is Mg(2+).

It is found in the cytoplasm. It catalyses the reaction beta-D-fructose 1,6-bisphosphate + H2O = beta-D-fructose 6-phosphate + phosphate. It participates in carbohydrate biosynthesis; Calvin cycle. This is Fructose-1,6-bisphosphatase class 1 from Rhodopseudomonas palustris (strain BisB18).